We begin with the raw amino-acid sequence, 115 residues long: Large ribosomal subunit protein bL19 (115 aa).

This sequence belongs to the bacterial ribosomal protein bL19 family.

This protein is located at the 30S-50S ribosomal subunit interface and may play a role in the structure and function of the aminoacyl-tRNA binding site. The protein is Large ribosomal subunit protein bL19 of Bacillus pumilus (strain SAFR-032).